Reading from the N-terminus, the 305-residue chain is tRNA uridine(34) hydroxylase (305 aa).

Residues 125-219 (ADENTVVVDK…YLEEVPREQS (95 aa)) form the Rhodanese domain. The Cysteine persulfide intermediate role is filled by cysteine 179.

This sequence belongs to the TrhO family.

The catalysed reaction is uridine(34) in tRNA + AH2 + O2 = 5-hydroxyuridine(34) in tRNA + A + H2O. Functionally, catalyzes oxygen-dependent 5-hydroxyuridine (ho5U) modification at position 34 in tRNAs. The sequence is that of tRNA uridine(34) hydroxylase from Brucella abortus (strain S19).